Here is a 194-residue protein sequence, read N- to C-terminus: Translation machinery-associated protein 22 (194 aa).

The region spanning 102-173 (VQIKRVERNK…DVQEWLLELY (72 aa)) is the SUI1 domain.

The protein belongs to the DENR family. In terms of assembly, interacts with the 40S ribosomal subunit.

It is found in the cytoplasm. The polypeptide is Translation machinery-associated protein 22 (tma22) (Neosartorya fischeri (strain ATCC 1020 / DSM 3700 / CBS 544.65 / FGSC A1164 / JCM 1740 / NRRL 181 / WB 181) (Aspergillus fischerianus)).